Here is a 117-residue protein sequence, read N- to C-terminus: Ig heavy chain V region MOPC 104E (117 aa).

The 116-residue stretch at 1–116 (EVQLQQSGPE…WGAGTTVTVS (116 aa)) folds into the Ig-like domain. A disulfide bridge connects residues C22 and C96. N-linked (GlcNAc...) (high mannose) asparagine; atypical glycosylation is present at N55.

The polypeptide is Ig heavy chain V region MOPC 104E (Mus musculus (Mouse)).